The following is a 157-amino-acid chain: Cyclic pyranopterin monophosphate synthase (157 aa).

Substrate is bound by residues 74-76 and 112-113; these read MCH and ME. D127 is an active-site residue.

Belongs to the MoaC family. Homohexamer; trimer of dimers.

It catalyses the reaction (8S)-3',8-cyclo-7,8-dihydroguanosine 5'-triphosphate = cyclic pyranopterin phosphate + diphosphate. It functions in the pathway cofactor biosynthesis; molybdopterin biosynthesis. In terms of biological role, catalyzes the conversion of (8S)-3',8-cyclo-7,8-dihydroguanosine 5'-triphosphate to cyclic pyranopterin monophosphate (cPMP). The chain is Cyclic pyranopterin monophosphate synthase from Campylobacter jejuni subsp. doylei (strain ATCC BAA-1458 / RM4099 / 269.97).